A 450-amino-acid polypeptide reads, in one-letter code: Probable glycylpeptide N-tetradecanoyltransferase (450 aa).

Residues 1–28 (MSHGHSHDGAPCGGHHGDDGAGGSRPSV) are disordered. Residues Q67, F68, W69, F200, L201, C202, V203, S209, R211, V212, and A213 each contribute to the tetradecanoyl-CoA site.

The protein belongs to the NMT family.

The protein localises to the cytoplasm. It carries out the reaction N-terminal glycyl-[protein] + tetradecanoyl-CoA = N-tetradecanoylglycyl-[protein] + CoA + H(+). Functionally, adds a myristoyl group to the N-terminal glycine residue of certain cellular proteins. The polypeptide is Probable glycylpeptide N-tetradecanoyltransferase (nmt-1) (Caenorhabditis elegans).